Reading from the N-terminus, the 166-residue chain is uncharacterized protein (166 aa).

To B.subtilis YpjQ.

This is an uncharacterized protein from Bacillus subtilis (strain 168).